Consider the following 437-residue polypeptide: Vasoactive intestinal polypeptide receptor 2 (437 aa).

An N-terminal signal peptide occupies residues 1 to 22 (MRASVVLTCYCWLLVRVSSIHP). Residues 23 to 123 (ECRFHLEIQE…EDESKITFYI (101 aa)) are Extracellular-facing. 3 cysteine pairs are disulfide-bonded: cysteine 37/cysteine 60, cysteine 51/cysteine 92, and cysteine 74/cysteine 108. 3 N-linked (GlcNAc...) asparagine glycosylation sites follow: asparagine 57, asparagine 87, and asparagine 91. A helical membrane pass occupies residues 124–149 (LVKAIYTLGYSVSLMSLTTGSIIICL). The Cytoplasmic portion of the chain corresponds to 150–157 (FRKLHCTR). A helical transmembrane segment spans residues 158–179 (NYIHLNLFLSFMLRAISVLVKD). Over 180–202 (SVLYSSSGTLRCHDQPGSWVGCK) the chain is Extracellular. Residues cysteine 201 and cysteine 270 are joined by a disulfide bond. A helical membrane pass occupies residues 203–227 (LSLVFFQYCIMANFYWLLVEGLYLH). Over 228–238 (TLLVAILPPSR) the chain is Cytoplasmic. The helical transmembrane segment at 239 to 260 (CFLAYLLIGWGIPSVCIGAWIA) threads the bilayer. Topologically, residues 261–279 (TRLSLEDTGCWDTNDHSIP) are extracellular. Residues 280–303 (WWVIRMPILISIVVNFALFISIVR) form a helical membrane-spanning segment. At 304 to 324 (ILLQKLTSPDVGGNDQSQYKR) the chain is on the cytoplasmic side. A helical transmembrane segment spans residues 325–345 (LAKSTLLLIPLFGVHYMVFAA). Residues 346 to 353 (FPIGISST) are Extracellular-facing. The helical transmembrane segment at 354–377 (YQILFELCVGSFQGLVVAVLYCFL) threads the bilayer. The Cytoplasmic segment spans residues 378 to 437 (NSEVQCELKRRWRGLCLTQPGSRDYRLHSWSMSRNGSESALQIHRGSRTQSFLQSETSVI).

This sequence belongs to the G-protein coupled receptor 2 family. As to quaternary structure, interacts with ADCYAP1/PACAP (via N-terminal extracellular domain); activated by PACAP27 and CAPAC38 neuropeptides. Interacts with VIP; the interaction results in VIPR1 activation. As to expression, mainly in the thalamus, hippocampus and in the suprachiasmatic nucleus.

The protein resides in the cell membrane. Functionally, g protein-coupled receptor activated by the neuropeptides vasoactive intestinal peptide (VIP) and pituitary adenylate cyclase-activating polypeptide (ADCYAP1/PACAP). Binds VIP and both PACAP27 and PACAP38 bioactive peptides with the order of ligand affinity of VIP = PACAP38 &gt; PACAP27. Ligand binding causes a conformation change that triggers signaling via guanine nucleotide-binding proteins (G proteins) and modulates the activity of downstream effectors. Activates cAMP-dependent pathway. May be coupled to phospholipase C. The polypeptide is Vasoactive intestinal polypeptide receptor 2 (Rattus norvegicus (Rat)).